A 501-amino-acid polypeptide reads, in one-letter code: ATP synthase subunit beta (501 aa).

153 to 160 is an ATP binding site; that stretch reads GGAGVGKT.

This sequence belongs to the ATPase alpha/beta chains family. F-type ATPases have 2 components, CF(1) - the catalytic core - and CF(0) - the membrane proton channel. CF(1) has five subunits: alpha(3), beta(3), gamma(1), delta(1), epsilon(1). CF(0) has three main subunits: a(1), b(2) and c(9-12). The alpha and beta chains form an alternating ring which encloses part of the gamma chain. CF(1) is attached to CF(0) by a central stalk formed by the gamma and epsilon chains, while a peripheral stalk is formed by the delta and b chains.

The protein resides in the cell inner membrane. The catalysed reaction is ATP + H2O + 4 H(+)(in) = ADP + phosphate + 5 H(+)(out). Produces ATP from ADP in the presence of a proton gradient across the membrane. The catalytic sites are hosted primarily by the beta subunits. This is ATP synthase subunit beta from Cytophaga hutchinsonii (strain ATCC 33406 / DSM 1761 / CIP 103989 / NBRC 15051 / NCIMB 9469 / D465).